The following is a 756-amino-acid chain: Glutathione biosynthesis bifunctional protein GshAB (756 aa).

The glutamate--cysteine ligase stretch occupies residues 1 to 338; that stretch reads MNYRELMQKK…TGDIFNEQVA (338 aa). The region spanning 493–751 is the ATP-grasp domain; the sequence is KKILSAAGFH…LTMDVLKLLY (259 aa). 520–578 lines the ATP pocket; the sequence is LRYANKAFVVKPKSTNYGLGITIFKEGASLEDFTEALRIAFKEDTAVLIEEFLPGTEYR. Mg(2+) is bound by residues D700, E721, and N723. Residues D700, E721, and N723 each coordinate Mn(2+).

The protein in the N-terminal section; belongs to the glutamate--cysteine ligase type 1 family. Type 2 subfamily. Monomer. Mg(2+) serves as cofactor. It depends on Mn(2+) as a cofactor.

The catalysed reaction is L-cysteine + L-glutamate + ATP = gamma-L-glutamyl-L-cysteine + ADP + phosphate + H(+). It catalyses the reaction gamma-L-glutamyl-L-cysteine + glycine + ATP = glutathione + ADP + phosphate + H(+). The protein operates within sulfur metabolism; glutathione biosynthesis; glutathione from L-cysteine and L-glutamate: step 1/2. It functions in the pathway sulfur metabolism; glutathione biosynthesis; glutathione from L-cysteine and L-glutamate: step 2/2. Functionally, synthesizes glutathione from L-glutamate and L-cysteine via gamma-L-glutamyl-L-cysteine. The chain is Glutathione biosynthesis bifunctional protein GshAB from Enterococcus faecalis (strain ATCC 700802 / V583).